The sequence spans 169 residues: Lipoprotein signal peptidase (169 aa).

Transmembrane regions (helical) follow at residues 10 to 30, 40 to 60, 68 to 88, and 94 to 114; these read LPWL…KAFF, IVVI…AAFS, WQRW…VVWL, and GETW…GNLY. Catalysis depends on residues Asp-124 and Asp-143. Residues 135–155 traverse the membrane as a helical segment; that stretch reads YFPAFNLADSAITVGAVMLAL.

It belongs to the peptidase A8 family.

The protein localises to the cell inner membrane. The catalysed reaction is Release of signal peptides from bacterial membrane prolipoproteins. Hydrolyzes -Xaa-Yaa-Zaa-|-(S,diacylglyceryl)Cys-, in which Xaa is hydrophobic (preferably Leu), and Yaa (Ala or Ser) and Zaa (Gly or Ala) have small, neutral side chains.. It participates in protein modification; lipoprotein biosynthesis (signal peptide cleavage). In terms of biological role, this protein specifically catalyzes the removal of signal peptides from prolipoproteins. In Pseudomonas aeruginosa (strain UCBPP-PA14), this protein is Lipoprotein signal peptidase.